The sequence spans 262 residues: tRNA pseudouridine synthase A (262 aa).

Asp52 (nucleophile) is an active-site residue. Substrate is bound at residue Tyr110.

The protein belongs to the tRNA pseudouridine synthase TruA family. As to quaternary structure, homodimer.

The enzyme catalyses uridine(38/39/40) in tRNA = pseudouridine(38/39/40) in tRNA. Its function is as follows. Formation of pseudouridine at positions 38, 39 and 40 in the anticodon stem and loop of transfer RNAs. The sequence is that of tRNA pseudouridine synthase A from Chromobacterium violaceum (strain ATCC 12472 / DSM 30191 / JCM 1249 / CCUG 213 / NBRC 12614 / NCIMB 9131 / NCTC 9757 / MK).